A 275-amino-acid chain; its full sequence is Nitrogenase iron protein 3 (275 aa).

Residue 9 to 16 coordinates ATP; it reads GKGGIGKS. Cys97 contacts [4Fe-4S] cluster. Arg100 carries the post-translational modification ADP-ribosylarginine; by dinitrogenase reductase ADP-ribosyltransferase. Residue Cys132 coordinates [4Fe-4S] cluster.

Belongs to the NifH/BchL/ChlL family. As to quaternary structure, homodimer. [4Fe-4S] cluster is required as a cofactor. In terms of processing, the reversible ADP-ribosylation of Arg-100 inactivates the nitrogenase reductase and regulates nitrogenase activity.

It carries out the reaction N2 + 8 reduced [2Fe-2S]-[ferredoxin] + 16 ATP + 16 H2O = H2 + 8 oxidized [2Fe-2S]-[ferredoxin] + 2 NH4(+) + 16 ADP + 16 phosphate + 6 H(+). Its function is as follows. The key enzymatic reactions in nitrogen fixation are catalyzed by the nitrogenase complex, which has 2 components: the iron protein and the molybdenum-iron protein. This Clostridium pasteurianum protein is Nitrogenase iron protein 3 (nifH3).